The primary structure comprises 247 residues: Phycobilisome rod-core linker polypeptide CpcG2 (247 aa).

Positions 11 to 189 (SSQNQRVPGY…YWRDKLENER (179 aa)) constitute a PBS-linker domain.

It belongs to the phycobilisome linker protein family. The phycobilisome is a hemidiscoidal structure that is composed of two distinct substructures: a core complex and a number of rods radiating from the core.

The protein resides in the cellular thylakoid membrane. Rod-core linker protein required for attachment of phycocyanin to allophycocyanin in cores of phycobilisomes. Functionally, linker polypeptides determine the state of aggregation and the location of the disk-shaped phycobiliprotein units within the phycobilisome and modulate their spectroscopic properties in order to mediate a directed and optimal energy transfer. This chain is Phycobilisome rod-core linker polypeptide CpcG2 (cpcG2), found in Mastigocladus laminosus (Fischerella sp.).